Here is a 1286-residue protein sequence, read N- to C-terminus: MLCLEKLVAVLLKTQRTSDAYKKGPWKSQRYTVSGSRVAYKRLNCDDIWARKKSRRIPMVPGGTYSPMPESQPLEDSPKALPVLGEQSNSDNDINEPVFIWGISDKAAQRKSISAGEGSFRLQQEKQQPLVHRPGRGKGRLRLPHRLPFKDRHFTCSKIIGRRFACFAQRLSYRRKQSQCDLLNESTGHLPATCSSAASKSLSWNYCSKMTQQMQNLHLSQSKKHSAPSSPNAAKRLYRNLSEKLKGSHSSFDEAYFRTRTDRLSLRKTSVNFQGNEAMFEAVEQQDLDAVQLLLYQYTPEELDLNTPNSEGLTPLDIAIMTNNVPIARILLRTGARESPHFVSLESRAMHLNTLVQEAQDRVSELSAQVENEGFTLDNTEKEKQLKAWEWRYRLYRRMKTGFEHARAPEVPANACLMVSSSTSLTVSFQEPLSVNAAVVTRYKVEWSMSKDFSPLAGEIIMDNLQTLRCTITGLTTGQQYFVQVSAYNMKGWGPAQTTTPVCASPSNWKDYDDREPRHKGQSEVLESLLQQVRALHQHYSCRESSKLQTTGRKQSVSRSLKHLFHSSNKFVKTLKRGLYIATIFYYKDNMLVTNEDQIPIVEIDDSHTSSITQDFLWFMKLSCMWEDIRWLRQSVPISMSSSTVLQTRQKMLAATAQLQNLLGTHNLGRLYYEPIKDRHGNILIVTIREVEMLYSFFNGKWMQISKLQSQRKSLSTPEEPTALDILLITIQDILSYHKRSHQRLSPGLYLGYLKLCSSVDQIKVLVTQKLPNILCHVKIRENHNISKEEWEWIQKLSGSESMESVDHNADCPMQLFFYELQMAVAALLKQINIPRHQARNFRLYTQEVLEIGHNVSFLLLLPASDDVCTAPGQNNPYTPHSGFLNLPLQMFELVHFCSYREKFISLYCRLSAVVELDSLNTQQSLREAISDSEVAAAKQRHQQVLDFIQQIDEVWREMRWIMDALQYARYKQPVSGLPITKLIDSSSEQNLKKISSTSSHIDCLPSTSPSPEMHRRKAVSESQPCSDEEGCSEVFLPTDSDYDSSDALSPRDLDLVYLSSHDIAQQALSGLSGSAPDVLQVHDMKASMGPGQDPQGPGQGPDTDHSCVEFLHSLTLTGLAPKNHAKMVAGTRPPLGFLGKRKPGKHQHYGGFSRHHRWLRMHSETQSLSLSEGVYTQHLSQACGLAEDPGEAEGPGPVVDGPRGLPLAHAASLPEERRSCLQDPRRPLQRVYVEPYSDTLAGQDPKLWTSLSPTPAGRSSLPSSTSSEMSPDPTSPVSEILSSML.

ANK repeat units lie at residues 274 to 303 and 311 to 340; these read QGNE…PEEL and EGLT…RESP. The region spanning 411–507 is the Fibronectin type-III domain; it reads VPANACLMVS…TTTPVCASPS (97 aa). Residues 748–755 form a highly conserved peptide sequence region; that stretch reads GLYLGYLK. The span at 999–1011 shows a compositional bias: polar residues; that stretch reads SSHIDCLPSTSPS. Disordered regions lie at residues 999 to 1032, 1086 to 1106, 1187 to 1207, and 1242 to 1286; these read SSHI…EEGC, KASM…DTDH, AEDP…RGLP, and AGQD…SSML. Residues 1260-1277 show a composition bias toward low complexity; sequence SSLPSSTSSEMSPDPTSP.

In terms of tissue distribution, expressed in both the suprachiasmatic nucleus and dorsal medial hypothalamus.

May play a role in neuronal function. This chain is Ankyrin-repeat and fibronectin type III domain-containing 1, found in Mus musculus (Mouse).